Here is a 487-residue protein sequence, read N- to C-terminus: MKYKDLRDFLVQLEQRGDLKRVDIEVDPHLEMTEICDRLLKQAGPAVLFERPAGHTIPVLGNLFGTPERVALGMGQTSVSALREVGKLLAYLKEPDPPKGLRDAWEKLPVLKQVLNMAPKQLASAPCQEIIWEGADVDLGKLPIQTCWPGDVAPLITWGLTVTRGPHKSRQNLGIYRQQVIAPNKVIMRWLAHRGGALDYRDFCQIYPGQPYPVAVALGADPATILGAVTPVPDSLSEYQFAGLLRGAKTEVVKCLTHDLQVPASAEIVLEGYIHPDEMAVEGPYGDHTGYYNEQETFPVFTIERITMRRNPIYHSTYTGKPPDEPAILGVALNEVFVPLLQKQFTEITDFYLPPEGCSYRLAVVSMKKQYPGHAKRVMFGIWSFLRQFMYTKFIIVTDDDIDIRDWKEVVWAMTTRVDPVRDTLIVENTPIDYLDFASPVSGLGSKMGLDATNKWPGETTREWGCPIEMDAAVKTRIDHLWQQLPF.

Asn172 serves as a coordination point for Mn(2+). Prenylated FMN contacts are provided by residues 175–177 (IYR), 189–191 (RWL), and 194–195 (RG). Glu238 serves as a coordination point for Mn(2+). The Proton donor role is filled by Asp287.

It belongs to the UbiD family. In terms of assembly, homohexamer. The cofactor is prenylated FMN. Mn(2+) serves as cofactor.

The protein resides in the cell membrane. It catalyses the reaction a 4-hydroxy-3-(all-trans-polyprenyl)benzoate + H(+) = a 2-(all-trans-polyprenyl)phenol + CO2. Its pathway is cofactor biosynthesis; ubiquinone biosynthesis. Catalyzes the decarboxylation of 3-octaprenyl-4-hydroxy benzoate to 2-octaprenylphenol, an intermediate step in ubiquinone biosynthesis. The polypeptide is 3-octaprenyl-4-hydroxybenzoate carboxy-lyase (Nitrosomonas europaea (strain ATCC 19718 / CIP 103999 / KCTC 2705 / NBRC 14298)).